We begin with the raw amino-acid sequence, 344 residues long: uncharacterized protein (344 aa).

Residues 221 to 249 (IQAQSMDEQKQIQEIYQNVEKLKEDVTKN) are a coiled coil.

The protein belongs to the IIV-6 287R family.

This is an uncharacterized protein from Aedes vexans (Inland floodwater mosquito).